Here is a 793-residue protein sequence, read N- to C-terminus: Splicing factor 3A subunit 1 (793 aa).

The tract at residues 1 to 42 (MPAGPVQAVPPPPPAATEPKQPTEEEASSKEDSTPSKPVVGI) is disordered. Lys20 is covalently cross-linked (Glycyl lysine isopeptide (Lys-Gly) (interchain with G-Cter in SUMO2)). The span at 21–34 (QPTEEEASSKEDST) shows a compositional bias: basic and acidic residues. An SURP motif 1 repeat occupies 52 to 94 (IVDKTASFVARNGPEFEARIRQNEINNPKFNFLNPNDPYHAYY). Lys55 is modified (N6-acetyllysine). Residue Lys131 forms a Glycyl lysine isopeptide (Lys-Gly) (interchain with G-Cter in SUMO2) linkage. An SURP motif 2 repeat occupies 166 to 208 (VVKLTAQFVARNGRQFLTQLMQKEQRNYQFDFLRPQHSLFNYF). Residues 318–412 (GESEEVEMEV…PAPAPDEYLV (95 aa)) form a disordered region. Residues Ser320, Ser329, and Ser359 each carry the phosphoserine modification. 2 stretches are compositionally biased toward acidic residues: residues 320-334 (SEEVEMEVESDEEDE) and 354-364 (DMDEGSDDEEE). Residues 368-384 (VPPPPETPMPPPLPPTP) show a composition bias toward pro residues. The segment covering 388–397 (IVRKDYDPKA) has biased composition (basic and acidic residues). Ser413 carries the phosphoserine modification. Residue Lys424 forms a Glycyl lysine isopeptide (Lys-Gly) (interchain with G-Cter in SUMO2) linkage. Ser451 is modified (phosphoserine). At Tyr456 the chain carries Phosphotyrosine. Residues 488–502 (IGEEEIQKPEEKVTW) are compositionally biased toward basic and acidic residues. Disordered stretches follow at residues 488–518 (IGEEEIQKPEEKVTWDGHSGSMARTQQAAQA), 530–584 (HKAK…AMPP), and 666–685 (PMPPVHPPPPMEDEPASKKL). Lys499 participates in a covalent cross-link: Glycyl lysine isopeptide (Lys-Gly) (interchain with G-Cter in SUMO2). Ser508 carries the phosphoserine modification. A compositionally biased stretch (polar residues) spans 509 to 518 (MARTQQAAQA). Lys542 participates in a covalent cross-link: Glycyl lysine isopeptide (Lys-Gly) (interchain with G-Cter in SUMO2). Residues 563 to 572 (ATNIPSSAPP) show a composition bias toward polar residues. A compositionally biased stretch (pro residues) spans 666-675 (PMPPVHPPPP). The segment at 680–702 (PASKKLKTEDSLMPEEEFLRRNK) is required and sufficient for nuclear import. Lys686 participates in a covalent cross-link: Glycyl lysine isopeptide (Lys-Gly) (interchain with G-Cter in SUMO2). Positions 707–793 (IKVQVPNMQD…ALKERGGRKK (87 aa)) constitute a Ubiquitin-like domain. A Phosphotyrosine modification is found at Tyr759.

In terms of assembly, component of the 17S U2 SnRNP complex, a ribonucleoprotein complex that contains small nuclear RNA (snRNA) U2 and a number of specific proteins. Part of the SF3A subcomplex of the 17S U2 SnRNP complex which is composed of three subunits; SF3A3/SAP61, SF3A2/SAP62 and SF3A1/SAP114. SF3A associates with the splicing factor SF3B and a 12S RNA unit to form the mature 17S U2 small nuclear ribonucleoprotein complex (17S U2 snRNP). SF3A1 functions as a scaffold that interacts directly with both SF3A2 and SF3A3. Identified in the spliceosome 'E' complex, a precursor of the spliceosome 'A' complex. Identified in the spliceosome 'A' and 'B' complexes. Identified in the spliceosome 'C' complex. Interacts with P2RX6; resulting in a reduction of the splicing activity.

It is found in the nucleus. It localises to the nucleus speckle. Component of the 17S U2 SnRNP complex of the spliceosome, a large ribonucleoprotein complex that removes introns from transcribed pre-mRNAs. The 17S U2 SnRNP complex (1) directly participates in early spliceosome assembly and (2) mediates recognition of the intron branch site during pre-mRNA splicing by promoting the selection of the pre-mRNA branch-site adenosine, the nucleophile for the first step of splicing. Within the 17S U2 SnRNP complex, SF3A1 is part of the SF3A subcomplex that contributes to the assembly of the 17S U2 snRNP, and the subsequent assembly of the pre-spliceosome 'E' complex and the pre-catalytic spliceosome 'A' complex. Involved in pre-mRNA splicing as a component of pre-catalytic spliceosome 'B' complexes. This Bos taurus (Bovine) protein is Splicing factor 3A subunit 1 (SF3A1).